The chain runs to 190 residues: B3 domain-containing protein At4g01580 (190 aa).

Positions 1 to 25 (MVITRNMKARATSVSHRQSQQDPES) are disordered. The segment covering 12–23 (TSVSHRQSQQDP) has biased composition (polar residues). Positions 29 to 122 (KFFKLVLPST…SFRVIIFNAS (94 aa)) form a DNA-binding region, TF-B3.

Its subcellular location is the nucleus. The sequence is that of B3 domain-containing protein At4g01580 from Arabidopsis thaliana (Mouse-ear cress).